The following is a 245-amino-acid chain: Biosynthetic peptidoglycan transglycosylase (245 aa).

The chain crosses the membrane as a helical span at residues 24 to 44 (LVVIGAWLAGILLFSFLPVPF).

The protein belongs to the glycosyltransferase 51 family.

It localises to the cell inner membrane. The enzyme catalyses [GlcNAc-(1-&gt;4)-Mur2Ac(oyl-L-Ala-gamma-D-Glu-L-Lys-D-Ala-D-Ala)](n)-di-trans,octa-cis-undecaprenyl diphosphate + beta-D-GlcNAc-(1-&gt;4)-Mur2Ac(oyl-L-Ala-gamma-D-Glu-L-Lys-D-Ala-D-Ala)-di-trans,octa-cis-undecaprenyl diphosphate = [GlcNAc-(1-&gt;4)-Mur2Ac(oyl-L-Ala-gamma-D-Glu-L-Lys-D-Ala-D-Ala)](n+1)-di-trans,octa-cis-undecaprenyl diphosphate + di-trans,octa-cis-undecaprenyl diphosphate + H(+). It participates in cell wall biogenesis; peptidoglycan biosynthesis. Its function is as follows. Peptidoglycan polymerase that catalyzes glycan chain elongation from lipid-linked precursors. The polypeptide is Biosynthetic peptidoglycan transglycosylase (Pectobacterium atrosepticum (strain SCRI 1043 / ATCC BAA-672) (Erwinia carotovora subsp. atroseptica)).